Consider the following 617-residue polypeptide: tRNA uridine 5-carboxymethylaminomethyl modification enzyme MnmG (617 aa).

FAD-binding positions include 9–14 (GAGHAG), valine 121, and threonine 176. 269-283 (GPRYCPSIEDKFVRF) contributes to the NAD(+) binding site. Glutamine 366 contributes to the FAD binding site.

It belongs to the MnmG family. As to quaternary structure, homodimer. Heterotetramer of two MnmE and two MnmG subunits. The cofactor is FAD.

The protein resides in the cytoplasm. Its function is as follows. NAD-binding protein involved in the addition of a carboxymethylaminomethyl (cmnm) group at the wobble position (U34) of certain tRNAs, forming tRNA-cmnm(5)s(2)U34. This is tRNA uridine 5-carboxymethylaminomethyl modification enzyme MnmG from Acholeplasma laidlawii (strain PG-8A).